The following is a 470-amino-acid chain: Sulfate adenylyltransferase subunit 1 (470 aa).

The tr-type G domain maps to 22-237 (KEVLRFITCG…LEEVPVKSEE (216 aa)). Residues 31–38 (GSVDDGKS) form a G1 region. Residue 31-38 (GSVDDGKS) participates in GTP binding. Positions 89–93 (GITID) are G2. The tract at residues 110–113 (DTPG) is G3. GTP contacts are provided by residues 110–114 (DTPGH) and 165–168 (NKMD). The G4 stretch occupies residues 165–168 (NKMD). The segment at 202-204 (SAK) is G5.

Belongs to the TRAFAC class translation factor GTPase superfamily. Classic translation factor GTPase family. CysN/NodQ subfamily. In terms of assembly, heterodimer composed of CysD, the smaller subunit, and CysN.

The catalysed reaction is sulfate + ATP + H(+) = adenosine 5'-phosphosulfate + diphosphate. Its pathway is sulfur metabolism; hydrogen sulfide biosynthesis; sulfite from sulfate: step 1/3. With CysD forms the ATP sulfurylase (ATPS) that catalyzes the adenylation of sulfate producing adenosine 5'-phosphosulfate (APS) and diphosphate, the first enzymatic step in sulfur assimilation pathway. APS synthesis involves the formation of a high-energy phosphoric-sulfuric acid anhydride bond driven by GTP hydrolysis by CysN coupled to ATP hydrolysis by CysD. The polypeptide is Sulfate adenylyltransferase subunit 1 (Methylorubrum populi (strain ATCC BAA-705 / NCIMB 13946 / BJ001) (Methylobacterium populi)).